A 492-amino-acid polypeptide reads, in one-letter code: Bifunctional protein GlmU (492 aa).

Residues Met-1–Arg-241 form a pyrophosphorylase region. UDP-N-acetyl-alpha-D-glucosamine contacts are provided by residues Leu-12 to Gly-15, Lys-26, Gln-83, and Gly-88 to Thr-89. A Mg(2+)-binding site is contributed by Asp-114. The UDP-N-acetyl-alpha-D-glucosamine site is built by Gly-151, Glu-166, Asn-181, and Asn-239. Asn-239 serves as a coordination point for Mg(2+). Positions Val-242–Ala-262 are linker. An N-acetyltransferase region spans residues Gly-263 to Pro-492. UDP-N-acetyl-alpha-D-glucosamine is bound by residues Arg-344 and Lys-362. His-374 (proton acceptor) is an active-site residue. Positions 377 and 388 each coordinate UDP-N-acetyl-alpha-D-glucosamine. Residues Ala-391, Asn-397–Tyr-398, and Ala-434 each bind acetyl-CoA. The tract at residues Pro-443 to Pro-492 is disordered.

This sequence in the N-terminal section; belongs to the N-acetylglucosamine-1-phosphate uridyltransferase family. It in the C-terminal section; belongs to the transferase hexapeptide repeat family. In terms of assembly, homotrimer. Requires Mg(2+) as cofactor.

The protein localises to the cytoplasm. It catalyses the reaction alpha-D-glucosamine 1-phosphate + acetyl-CoA = N-acetyl-alpha-D-glucosamine 1-phosphate + CoA + H(+). The enzyme catalyses N-acetyl-alpha-D-glucosamine 1-phosphate + UTP + H(+) = UDP-N-acetyl-alpha-D-glucosamine + diphosphate. It participates in nucleotide-sugar biosynthesis; UDP-N-acetyl-alpha-D-glucosamine biosynthesis; N-acetyl-alpha-D-glucosamine 1-phosphate from alpha-D-glucosamine 6-phosphate (route II): step 2/2. It functions in the pathway nucleotide-sugar biosynthesis; UDP-N-acetyl-alpha-D-glucosamine biosynthesis; UDP-N-acetyl-alpha-D-glucosamine from N-acetyl-alpha-D-glucosamine 1-phosphate: step 1/1. The protein operates within bacterial outer membrane biogenesis; LPS lipid A biosynthesis. Functionally, catalyzes the last two sequential reactions in the de novo biosynthetic pathway for UDP-N-acetylglucosamine (UDP-GlcNAc). The C-terminal domain catalyzes the transfer of acetyl group from acetyl coenzyme A to glucosamine-1-phosphate (GlcN-1-P) to produce N-acetylglucosamine-1-phosphate (GlcNAc-1-P), which is converted into UDP-GlcNAc by the transfer of uridine 5-monophosphate (from uridine 5-triphosphate), a reaction catalyzed by the N-terminal domain. This is Bifunctional protein GlmU from Mycobacterium ulcerans (strain Agy99).